The chain runs to 683 residues: Methionine--tRNA ligase (683 aa).

The 'HIGH' region motif lies at 15-25; it reads PYANGPIHLGH. Cysteine 146, cysteine 149, cysteine 159, and cysteine 162 together coordinate Zn(2+). A 'KMSKS' region motif is present at residues 332 to 336; that stretch reads KMSKS. Lysine 335 serves as a coordination point for ATP. In terms of domain architecture, tRNA-binding spans 582–683; it reads DFAKIDLRIA…EGALPGMRVK (102 aa).

The protein belongs to the class-I aminoacyl-tRNA synthetase family. MetG type 1 subfamily. As to quaternary structure, homodimer. Zn(2+) serves as cofactor.

It is found in the cytoplasm. It carries out the reaction tRNA(Met) + L-methionine + ATP = L-methionyl-tRNA(Met) + AMP + diphosphate. Its function is as follows. Is required not only for elongation of protein synthesis but also for the initiation of all mRNA translation through initiator tRNA(fMet) aminoacylation. The polypeptide is Methionine--tRNA ligase (Shewanella frigidimarina (strain NCIMB 400)).